The chain runs to 335 residues: Ornithine carbamoyltransferase (335 aa).

Carbamoyl phosphate-binding positions include 60–63 (STRT), Gln-87, Arg-111, and 138–141 (HPTQ). L-ornithine is bound by residues Asn-171, Asp-235, and 239–240 (SM). Residues 277–278 (CL) and Arg-322 contribute to the carbamoyl phosphate site.

This sequence belongs to the aspartate/ornithine carbamoyltransferase superfamily. OTCase family.

The protein resides in the cytoplasm. The enzyme catalyses carbamoyl phosphate + L-ornithine = L-citrulline + phosphate + H(+). The protein operates within amino-acid biosynthesis; L-arginine biosynthesis; L-arginine from L-ornithine and carbamoyl phosphate: step 1/3. Functionally, reversibly catalyzes the transfer of the carbamoyl group from carbamoyl phosphate (CP) to the N(epsilon) atom of ornithine (ORN) to produce L-citrulline. The polypeptide is Ornithine carbamoyltransferase (Streptomyces avermitilis (strain ATCC 31267 / DSM 46492 / JCM 5070 / NBRC 14893 / NCIMB 12804 / NRRL 8165 / MA-4680)).